A 156-amino-acid chain; its full sequence is Small ribosomal subunit protein uS7 (156 aa).

Belongs to the universal ribosomal protein uS7 family. As to quaternary structure, part of the 30S ribosomal subunit. Contacts proteins S9 and S11.

One of the primary rRNA binding proteins, it binds directly to 16S rRNA where it nucleates assembly of the head domain of the 30S subunit. Is located at the subunit interface close to the decoding center, probably blocks exit of the E-site tRNA. This Rhizobium leguminosarum bv. trifolii (strain WSM2304) protein is Small ribosomal subunit protein uS7.